The following is a 272-amino-acid chain: Ribosomal RNA small subunit methyltransferase A (272 aa).

Positions 18, 20, 45, 66, 91, and 113 each coordinate S-adenosyl-L-methionine.

Belongs to the class I-like SAM-binding methyltransferase superfamily. rRNA adenine N(6)-methyltransferase family. RsmA subfamily.

It is found in the cytoplasm. It carries out the reaction adenosine(1518)/adenosine(1519) in 16S rRNA + 4 S-adenosyl-L-methionine = N(6)-dimethyladenosine(1518)/N(6)-dimethyladenosine(1519) in 16S rRNA + 4 S-adenosyl-L-homocysteine + 4 H(+). Its function is as follows. Specifically dimethylates two adjacent adenosines (A1518 and A1519) in the loop of a conserved hairpin near the 3'-end of 16S rRNA in the 30S particle. May play a critical role in biogenesis of 30S subunits. This Yersinia pseudotuberculosis serotype O:1b (strain IP 31758) protein is Ribosomal RNA small subunit methyltransferase A.